A 503-amino-acid polypeptide reads, in one-letter code: AMP phosphorylase (503 aa).

Residues Gly168, 194 to 199, and Thr203 each bind AMP; that span reads SRAITS. Asp256 functions as the Proton donor in the catalytic mechanism. 2 residues coordinate AMP: Ser264 and Lys288.

It belongs to the thymidine/pyrimidine-nucleoside phosphorylase family. Type 2 subfamily.

The catalysed reaction is AMP + phosphate = alpha-D-ribose 1,5-bisphosphate + adenine. It catalyses the reaction CMP + phosphate = cytosine + alpha-D-ribose 1,5-bisphosphate. It carries out the reaction UMP + phosphate = alpha-D-ribose 1,5-bisphosphate + uracil. Its function is as follows. Catalyzes the conversion of AMP and phosphate to adenine and ribose 1,5-bisphosphate (R15P). Exhibits phosphorylase activity toward CMP and UMP in addition to AMP. Functions in an archaeal AMP degradation pathway, together with R15P isomerase and RubisCO. The sequence is that of AMP phosphorylase from Methanocaldococcus jannaschii (strain ATCC 43067 / DSM 2661 / JAL-1 / JCM 10045 / NBRC 100440) (Methanococcus jannaschii).